Consider the following 251-residue polypeptide: Aquaporin TIP1-1 (251 aa).

At M1 the chain carries N-acetylmethionine. At 1–23 the chain is on the cytoplasmic side; it reads MPIRNIAIGRPDEATRPDALKAA. The helical transmembrane segment at 24–44 threads the bilayer; sequence LAEFISTLIFVVAGSGSGMAF. Over 45-56 the chain is Vacuolar; it reads NKLTENGATTPS. A helical transmembrane segment spans residues 57–77; sequence GLVAAAVAHAFGLFVAVSVGA. Over 78–103 the chain is Cytoplasmic; the sequence is NISGGHVNPAVTFGAFIGGNITLLRG. The short motif at 85–87 is the NPA 1 element; the sequence is NPA. The chain crosses the membrane as a helical span at residues 104–124; the sequence is ILYWIAQLLGSVVACLILKFA. The Vacuolar segment spans residues 125–143; it reads TGGLAVPAFGLSAGVGVLN. The helical transmembrane segment at 144–164 threads the bilayer; the sequence is AFVFEIVMTFGLVYTVYATAI. Topologically, residues 165–172 are cytoplasmic; sequence DPKNGSLG. Residues 173–193 traverse the membrane as a helical segment; it reads TIAPIAIGFIVGANILAGGAF. Residues 194–218 are Vacuolar-facing; sequence SGASMNPAVAFGPAVVSWTWTNHWV. The NPA 2 signature appears at 199–201; sequence NPA. The chain crosses the membrane as a helical span at residues 219-239; the sequence is YWAGPLVGGGIAGLIYEVFFI. The Cytoplasmic portion of the chain corresponds to 240–251; the sequence is NTTHEQLPTTDY.

It belongs to the MIP/aquaporin (TC 1.A.8) family. TIP (TC 1.A.8.10) subfamily. In terms of assembly, interacts with cucumber mosaic virus (CMV) Protein 1a. As to expression, in all the vegetative organs, but not in seeds. Preferentially expressed in roots.

The protein resides in the vacuole membrane. Water channel required to facilitate the transport of water, diffusion of amino acids and/or peptides from the vacuolar compartment to the cytoplasm. Does not promote glycerol permeability. May play a role in the control of cell turgor and cell expansion. Its function is impaired by Hg(2+). May be involved in a vesicle-based metabolite routing through or between pre-vacuolar compartments and the central vacuole. Transports urea in yeast cells in a pH-independent manner. Transports H(2)O(2) in yeast cells. This Arabidopsis thaliana (Mouse-ear cress) protein is Aquaporin TIP1-1 (TIP1-1).